We begin with the raw amino-acid sequence, 211 residues long: Thiamine-phosphate synthase (211 aa).

Residues 38-42 (QLREK) and Asn70 contribute to the 4-amino-2-methyl-5-(diphosphooxymethyl)pyrimidine site. Mg(2+) is bound by residues Asp71 and Asp90. Ser109 provides a ligand contact to 4-amino-2-methyl-5-(diphosphooxymethyl)pyrimidine. 2-[(2R,5Z)-2-carboxy-4-methylthiazol-5(2H)-ylidene]ethyl phosphate is bound at residue 135-137 (TST). A 4-amino-2-methyl-5-(diphosphooxymethyl)pyrimidine-binding site is contributed by Lys138. Residues Gly165 and 185 to 186 (IS) contribute to the 2-[(2R,5Z)-2-carboxy-4-methylthiazol-5(2H)-ylidene]ethyl phosphate site.

Belongs to the thiamine-phosphate synthase family. Mg(2+) is required as a cofactor.

It catalyses the reaction 2-[(2R,5Z)-2-carboxy-4-methylthiazol-5(2H)-ylidene]ethyl phosphate + 4-amino-2-methyl-5-(diphosphooxymethyl)pyrimidine + 2 H(+) = thiamine phosphate + CO2 + diphosphate. The enzyme catalyses 2-(2-carboxy-4-methylthiazol-5-yl)ethyl phosphate + 4-amino-2-methyl-5-(diphosphooxymethyl)pyrimidine + 2 H(+) = thiamine phosphate + CO2 + diphosphate. The catalysed reaction is 4-methyl-5-(2-phosphooxyethyl)-thiazole + 4-amino-2-methyl-5-(diphosphooxymethyl)pyrimidine + H(+) = thiamine phosphate + diphosphate. The protein operates within cofactor biosynthesis; thiamine diphosphate biosynthesis; thiamine phosphate from 4-amino-2-methyl-5-diphosphomethylpyrimidine and 4-methyl-5-(2-phosphoethyl)-thiazole: step 1/1. Its function is as follows. Condenses 4-methyl-5-(beta-hydroxyethyl)thiazole monophosphate (THZ-P) and 2-methyl-4-amino-5-hydroxymethyl pyrimidine pyrophosphate (HMP-PP) to form thiamine monophosphate (TMP). The sequence is that of Thiamine-phosphate synthase from Clostridium acetobutylicum (strain ATCC 824 / DSM 792 / JCM 1419 / IAM 19013 / LMG 5710 / NBRC 13948 / NRRL B-527 / VKM B-1787 / 2291 / W).